We begin with the raw amino-acid sequence, 240 residues long: Triosephosphate isomerase (240 aa).

A substrate-binding site is contributed by 8 to 10 (NWK). Histidine 93 serves as the catalytic Electrophile. Glutamate 160 functions as the Proton acceptor in the catalytic mechanism. Glycine 166 contacts substrate.

Belongs to the triosephosphate isomerase family. In terms of assembly, homodimer.

The protein resides in the cytoplasm. The catalysed reaction is D-glyceraldehyde 3-phosphate = dihydroxyacetone phosphate. The protein operates within carbohydrate biosynthesis; gluconeogenesis. It functions in the pathway carbohydrate degradation; glycolysis; D-glyceraldehyde 3-phosphate from glycerone phosphate: step 1/1. Its function is as follows. Involved in the gluconeogenesis. Catalyzes stereospecifically the conversion of dihydroxyacetone phosphate (DHAP) to D-glyceraldehyde-3-phosphate (G3P). This is Triosephosphate isomerase from Ehrlichia chaffeensis (strain ATCC CRL-10679 / Arkansas).